A 368-amino-acid polypeptide reads, in one-letter code: MNKTIMALAIMMASFAANASVLPETPVPFKSGTGAIDNDTVYIGLGSAGTAWYKLDTQAKDKKWTALAAFPGGPRDQATSAFIDGNLYVFGGIGKNSEGLTQVFNDVHKYNPKTNSWVKLMSLAPMGMAGHVTFVHNGKAYVTGGVNQNIFNGYFEDLNEAGKDSTAIDKINAHYFDKKAEDYFFNKFLLSFDPSTQQWSYAGESPWYGTAGAAVVNKGDKTWLINGEAKPGLRTDAVFELDFTGNNLKWNKLDPVSSPDGVAGGFAGISNDSLIFAGGAGFKGSRENYQNGKNYAHEGLKKSYSTDIHLWHNGKWDKSGELSQGRAYGVSLPWNNSLLIIGGETAGGKAVTDSVLISVKDNKVTVQN.

The first 19 residues, 1–19, serve as a signal peptide directing secretion; the sequence is MNKTIMALAIMMASFAANA. Kelch repeat units lie at residues 40–84, 86–137, 139–173, 174–219, 222–265, 287–336, and 338–367; these read TVYI…AFID, NLYV…FVHN, KAYV…KINA, HYFD…VNKG, TWLI…VAGG, ENYQ…PWNN, and LLII…VTVQ. E228 acts as the Proton acceptor in catalysis.

The protein belongs to the NanM family. As to quaternary structure, homodimer.

The protein localises to the periplasm. The enzyme catalyses N-acetyl-alpha-neuraminate = N-acetyl-beta-neuraminate. In terms of biological role, converts alpha-N-acetylneuranimic acid (Neu5Ac) to the beta-anomer, accelerating the equilibrium between the alpha- and beta-anomers. Probably facilitates sialidase-negative bacteria to compete successfully for limited amounts of extracellular Neu5Ac, which is likely taken up in the beta-anomer. In addition, the rapid removal of sialic acid from solution might be advantageous to the bacterium to damp down host responses. This Shigella sonnei (strain Ss046) protein is N-acetylneuraminate epimerase.